Here is a 373-residue protein sequence, read N- to C-terminus: L-threonine 3-dehydrogenase, mitochondrial (373 aa).

NAD(+) is bound by residues 62 to 67 (GGLGQL), 88 to 90 (DIR), 106 to 107 (DI), Y195, K199, and I225. Catalysis depends on Y195, which acts as the Proton donor/acceptor.

Belongs to the NAD(P)-dependent epimerase/dehydratase family. As to quaternary structure, homodimer.

The protein resides in the mitochondrion. The enzyme catalyses L-threonine + NAD(+) = (2S)-2-amino-3-oxobutanoate + NADH + H(+). It functions in the pathway amino-acid degradation; L-threonine degradation via oxydo-reductase pathway; glycine from L-threonine: step 1/2. Its function is as follows. Catalyzes the NAD(+)-dependent oxidation of L-threonine to 2-amino-3-ketobutyrate, mediating L-threonine catabolism. The sequence is that of L-threonine 3-dehydrogenase, mitochondrial from Sus scrofa (Pig).